We begin with the raw amino-acid sequence, 176 residues long: NAD(P)H-quinone oxidoreductase subunit 6, chloroplastic (176 aa).

The next 5 helical transmembrane spans lie at Phe-10–Pro-30, Pro-32–Leu-52, Ala-61–Leu-81, Val-95–Ile-115, and Phe-152–Ala-172.

It belongs to the complex I subunit 6 family. As to quaternary structure, NDH is composed of at least 16 different subunits, 5 of which are encoded in the nucleus.

The protein localises to the plastid. It is found in the chloroplast thylakoid membrane. The catalysed reaction is a plastoquinone + NADH + (n+1) H(+)(in) = a plastoquinol + NAD(+) + n H(+)(out). The enzyme catalyses a plastoquinone + NADPH + (n+1) H(+)(in) = a plastoquinol + NADP(+) + n H(+)(out). NDH shuttles electrons from NAD(P)H:plastoquinone, via FMN and iron-sulfur (Fe-S) centers, to quinones in the photosynthetic chain and possibly in a chloroplast respiratory chain. The immediate electron acceptor for the enzyme in this species is believed to be plastoquinone. Couples the redox reaction to proton translocation, and thus conserves the redox energy in a proton gradient. This Trachelium caeruleum (Blue throatwort) protein is NAD(P)H-quinone oxidoreductase subunit 6, chloroplastic (ndhG).